The primary structure comprises 456 residues: Ribosome assembly protein METTL17, mitochondrial (456 aa).

Residues 1–19 (MAAALKCLLTLGRWCPGLG) constitute a mitochondrion transit peptide. Positions 333, 339, 347, and 404 each coordinate [4Fe-4S] cluster.

This sequence belongs to the methyltransferase superfamily. Rsm22 family. Associates with the mitochondrial ribosome (mitoribosome).

The protein resides in the mitochondrion matrix. Mitochondrial ribosome (mitoribosome) assembly factor. Binds at the interface of the head and body domains of the mitochondrial small ribosomal subunit (mt-SSU), occluding the mRNA channel and preventing compaction of the head domain towards the body. Probable inactive methyltransferase: retains the characteristic folding and ability to bind S-adenosyl-L-methionine, but it probably lost its methyltransferase activity. The protein is Ribosome assembly protein METTL17, mitochondrial of Homo sapiens (Human).